Reading from the N-terminus, the 210-residue chain is Protein GrpE (210 aa).

Residues 1-71 form a disordered region; the sequence is MSEKDQSVNN…DTKIKELEKL (71 aa). Positions 11–23 are enriched in acidic residues; the sequence is TEEDFNVETEDNQ. The segment covering 24–35 has biased composition (polar residues); that stretch reads NDTNIENSVSNT. Positions 36-46 are enriched in low complexity; that stretch reads DNSEANASDSE. A compositionally biased stretch (acidic residues) spans 47-60; the sequence is NNSEESIKDEESES. A compositionally biased stretch (basic and acidic residues) spans 61–71; the sequence is QDTKIKELEKL.

The protein belongs to the GrpE family. In terms of assembly, homodimer.

The protein localises to the cytoplasm. Functionally, participates actively in the response to hyperosmotic and heat shock by preventing the aggregation of stress-denatured proteins, in association with DnaK and GrpE. It is the nucleotide exchange factor for DnaK and may function as a thermosensor. Unfolded proteins bind initially to DnaJ; upon interaction with the DnaJ-bound protein, DnaK hydrolyzes its bound ATP, resulting in the formation of a stable complex. GrpE releases ADP from DnaK; ATP binding to DnaK triggers the release of the substrate protein, thus completing the reaction cycle. Several rounds of ATP-dependent interactions between DnaJ, DnaK and GrpE are required for fully efficient folding. This is Protein GrpE from Staphylococcus epidermidis (strain ATCC 35984 / DSM 28319 / BCRC 17069 / CCUG 31568 / BM 3577 / RP62A).